The following is a 398-amino-acid chain: uncharacterized protein (398 aa).

The next 2 membrane-spanning stretches (helical) occupy residues 31 to 51 and 56 to 76; these read VVFS…CLLF and AFIT…FFGC.

This sequence belongs to the chlamydial CPn_0129/CT_036/TC_0306 family.

It is found in the cell membrane. This is an uncharacterized protein from Chlamydia muridarum (strain MoPn / Nigg).